A 356-amino-acid polypeptide reads, in one-letter code: NADH-quinone oxidoreductase subunit H (356 aa).

A run of 8 helical transmembrane segments spans residues Ile-18–Ile-38, Gly-87–Ile-107, Val-120–Gly-140, Ile-166–Val-186, Ile-205–Leu-225, Ala-265–Ile-285, Trp-292–Met-312, and Phe-333–Ile-353.

Belongs to the complex I subunit 1 family. As to quaternary structure, NDH-1 is composed of 14 different subunits. Subunits NuoA, H, J, K, L, M, N constitute the membrane sector of the complex.

It localises to the cell inner membrane. The catalysed reaction is a quinone + NADH + 5 H(+)(in) = a quinol + NAD(+) + 4 H(+)(out). Functionally, NDH-1 shuttles electrons from NADH, via FMN and iron-sulfur (Fe-S) centers, to quinones in the respiratory chain. The immediate electron acceptor for the enzyme in this species is believed to be ubiquinone. Couples the redox reaction to proton translocation (for every two electrons transferred, four hydrogen ions are translocated across the cytoplasmic membrane), and thus conserves the redox energy in a proton gradient. This subunit may bind ubiquinone. This Bradyrhizobium sp. (strain ORS 278) protein is NADH-quinone oxidoreductase subunit H.